A 1178-amino-acid polypeptide reads, in one-letter code: MFELNNFDALQIGLASPEKIREWSRGEVKKPETINYRTLKPERDGLFCERIFGPMKDWECHCGKYKRIRYKGIVCDRCGVEVTKAKVRRERMGHIELAAPVSHIWYFKGIPSRMGLILDMSPRALEKVLYFASYVVLDPKETPLLKKQLLNEKEYRESIDKYGDDSFVAAMGAEAVKTLLDEIDLEQSSIELKEELKTSTGQKKIRIIRRLEVVESFRKSGNRPDWMVIDVIPVIPPDLRPMVQLDGGRFATSDLNDLYRRVINRNNRLKKLLDLGAPDIIVRNEKRMLQEAVDALIDNGRRGRPVTGPGNRPLKSLSDMLKGKQGRFRQNLLGKRVDYSGRSVIVVGPELKMYQCGLPKEMALELFKPFVMKKLVQNGLAHNIKSAKRMVERVQPQVWDVLEEVISDHPVLLNRAPTLHRLGIQAFQPVLVEGRAIKLHPLVCTAYNADFDGDQMAVHVPLSVEAQAEARFLMLAAHNILKPSDGKPVSVPTQDMVLGSYYLTMDKDGVKGEGKVFSCPEEVLMAYQCKAVDIHAKIKVRLKKVIDGETIEGIIETTPGKIIFNESIPQDLGYIDRTVPENKLKLEVDFLVSKKTLGGIINRCYMKHGATKTSIMLDKIKAKGYHYSTIGAITISTSDMVVPEAKRELLQNTEKQVEKIQKMYRRGFISEEERYEKVIDLWTKTTEDVANALMASLDSFNPIYMMADSGARGSKSQIKQLAGMRGLMANPSGKIIELPIKASFREGLDVLEYFISTHGARKGNADTALKTADSGYLTRRLVDVSQDVIVRQEDCGTEEGYEVSEIKEGNEVIEPLVERLSGRYPSEDIINPTTGEVIVKRNTYMNEDIAKKVSDAGIKKVKIRSVFTCKSKHGVCARCYGMNMATSQKIHIGEAVGIVAAQSIGEPGTQLTMRTFHTGGVAGADITQGLPRVEELFEARKPKGLAIVSEVSGTVKMEETKKKRTIIVVTDDGEEVSYDIPFGSRIKVKNGDIISAGDEITEGSINPHDILRIKGVDGVKNYLLSEVQKVYRLQGVDINDKHLEVVIRQMTRKIKIEDSGDTELLPGTMIDVFDFEEANREILEKGGEPAVGRIALLGITKAALATDSFLSAASFQETTRVLTDAAIKGKIDPLLGLKENVIIGKLIPAGTGMTRYRSIQINTDDENIEEDSMDSIEV.

4 residues coordinate Zn(2+): C60, C62, C75, and C78. 3 residues coordinate Mg(2+): D450, D452, and D454. C795, C869, C876, and C879 together coordinate Zn(2+).

Belongs to the RNA polymerase beta' chain family. In terms of assembly, the RNAP catalytic core consists of 2 alpha, 1 beta, 1 beta' and 1 omega subunit. When a sigma factor is associated with the core the holoenzyme is formed, which can initiate transcription. The cofactor is Mg(2+). Zn(2+) is required as a cofactor.

The enzyme catalyses RNA(n) + a ribonucleoside 5'-triphosphate = RNA(n+1) + diphosphate. Functionally, DNA-dependent RNA polymerase catalyzes the transcription of DNA into RNA using the four ribonucleoside triphosphates as substrates. The protein is DNA-directed RNA polymerase subunit beta' of Clostridium botulinum (strain ATCC 19397 / Type A).